The following is a 296-amino-acid chain: MNLEKLTTETRNQKTMALDMLSVKEMLELMNQEDQRVPVAVSKELPQIECAVDKIVANFKAGGRLIYMGAGTSGRLGVLDAAECVPTFGTSPEMVQGLIAGGMSAMTVAVEGAEDSIELGQQDLVDLHLTSHDTVVGVAASGRTPYVIGGLDYACEVGATTVSIACNADASISQHAQIPIEVEVGPEILTGSTRLKSGTAQKLVLNMLSTASMVGIGKVYKNLMVDVKPTNEKLVERAKRIIVQATDCSDETAVKVFMTADQNVKLAIVMVLTNMSKAEASVRLDHANGFVRQAVN.

Residues 55 to 218 form the SIS domain; it reads IVANFKAGGR…STASMVGIGK (164 aa). Glutamate 83 (proton donor) is an active-site residue. Residue glutamate 114 is part of the active site.

Belongs to the GCKR-like family. MurNAc-6-P etherase subfamily. As to quaternary structure, homodimer.

The catalysed reaction is N-acetyl-D-muramate 6-phosphate + H2O = N-acetyl-D-glucosamine 6-phosphate + (R)-lactate. It functions in the pathway amino-sugar metabolism; N-acetylmuramate degradation. Specifically catalyzes the cleavage of the D-lactyl ether substituent of MurNAc 6-phosphate, producing GlcNAc 6-phosphate and D-lactate. In Lactiplantibacillus plantarum (strain ATCC BAA-793 / NCIMB 8826 / WCFS1) (Lactobacillus plantarum), this protein is N-acetylmuramic acid 6-phosphate etherase 2.